The primary structure comprises 274 residues: Large ribosomal subunit protein uL2 (274 aa).

2 disordered regions span residues 28–55 (APHA…RHVG) and 224–274 (VAMN…RRRK). A compositionally biased stretch (basic and acidic residues) spans 263–274 (KRTDKMIVRRRK).

It belongs to the universal ribosomal protein uL2 family. As to quaternary structure, part of the 50S ribosomal subunit. Forms a bridge to the 30S subunit in the 70S ribosome.

Its function is as follows. One of the primary rRNA binding proteins. Required for association of the 30S and 50S subunits to form the 70S ribosome, for tRNA binding and peptide bond formation. It has been suggested to have peptidyltransferase activity; this is somewhat controversial. Makes several contacts with the 16S rRNA in the 70S ribosome. The protein is Large ribosomal subunit protein uL2 of Pseudomonas fluorescens (strain ATCC BAA-477 / NRRL B-23932 / Pf-5).